An 88-amino-acid polypeptide reads, in one-letter code: Small ribosomal subunit protein bS16c (88 aa).

The protein belongs to the bacterial ribosomal protein bS16 family.

It is found in the plastid. The protein localises to the chloroplast. This Atropa belladonna (Belladonna) protein is Small ribosomal subunit protein bS16c.